We begin with the raw amino-acid sequence, 290 residues long: Eukaryotic translation initiation factor 3 subunit F-2 (290 aa).

Residues 12 to 150 form the MPN domain; that stretch reads VRLQPLVLFQ…TRLYCAVTMG (139 aa).

It belongs to the eIF-3 subunit F family. Component of the eukaryotic translation initiation factor 3 (eIF-3) complex. The eIF-3 complex interacts with pix.

The protein resides in the cytoplasm. In terms of biological role, component of the eukaryotic translation initiation factor 3 (eIF-3) complex, which is involved in protein synthesis of a specialized repertoire of mRNAs and, together with other initiation factors, stimulates binding of mRNA and methionyl-tRNAi to the 40S ribosome. The eIF-3 complex specifically targets and initiates translation of a subset of mRNAs involved in cell proliferation. This Drosophila mojavensis (Fruit fly) protein is Eukaryotic translation initiation factor 3 subunit F-2.